An 890-amino-acid polypeptide reads, in one-letter code: Translation initiation factor IF-2 (890 aa).

The disordered stretch occupies residues 45–304; sequence LIDHLNQKNS…LQQGFQKPAQ (260 aa). Polar residues predominate over residues 67 to 81; the sequence is STLNIPGTGGKSKSV. The segment covering 92–217 has biased composition (basic and acidic residues); sequence VKRDPQEAER…RMAEENKWTD (126 aa). The segment covering 252–266 has biased composition (basic residues); it reads GRGRNAKAARPKKGN. A compositionally biased stretch (basic and acidic residues) spans 267–280; that stretch reads KHAESKADREEARA. Positions 389-558 constitute a tr-type G domain; it reads PRAPVVTIMG…LLQAEVLELK (170 aa). The tract at residues 398 to 405 is G1; that stretch reads GHVDHGKT. 398 to 405 is a binding site for GTP; the sequence is GHVDHGKT. Residues 423–427 are G2; that stretch reads GITQH. The tract at residues 444-447 is G3; it reads DTPG. Residues 444–448 and 498–501 contribute to the GTP site; these read DTPGH and NKID. The segment at 498–501 is G4; the sequence is NKID. A G5 region spans residues 534 to 536; sequence SAK. Lysine 808 carries the N6-acetyllysine modification.

This sequence belongs to the TRAFAC class translation factor GTPase superfamily. Classic translation factor GTPase family. IF-2 subfamily.

It localises to the cytoplasm. One of the essential components for the initiation of protein synthesis. Protects formylmethionyl-tRNA from spontaneous hydrolysis and promotes its binding to the 30S ribosomal subunits. Also involved in the hydrolysis of GTP during the formation of the 70S ribosomal complex. This chain is Translation initiation factor IF-2, found in Escherichia coli O127:H6 (strain E2348/69 / EPEC).